The primary structure comprises 143 residues: Hemoglobin subunit alpha (143 aa).

One can recognise a Globin domain in the interval 2-143; the sequence is TLSDKDKSTV…VALALAERYR (142 aa). Residue H60 participates in O2 binding. Heme b is bound at residue H89.

Belongs to the globin family. As to quaternary structure, heterotetramer of two alpha chains and two beta chains. Red blood cells.

In terms of biological role, involved in oxygen transport from gills to the various peripheral tissues. The chain is Hemoglobin subunit alpha (hba) from Thunnus thynnus (Atlantic bluefin tuna).